We begin with the raw amino-acid sequence, 318 residues long: Acetyl-coenzyme A carboxylase carboxyl transferase subunit alpha (318 aa).

A CoA carboxyltransferase C-terminal domain is found at 41–295 (RLTTKSQELT…KRQLIADLGS (255 aa)).

It belongs to the AccA family. In terms of assembly, acetyl-CoA carboxylase is a heterohexamer composed of biotin carboxyl carrier protein (AccB), biotin carboxylase (AccC) and two subunits each of ACCase subunit alpha (AccA) and ACCase subunit beta (AccD).

The protein resides in the cytoplasm. It carries out the reaction N(6)-carboxybiotinyl-L-lysyl-[protein] + acetyl-CoA = N(6)-biotinyl-L-lysyl-[protein] + malonyl-CoA. Its pathway is lipid metabolism; malonyl-CoA biosynthesis; malonyl-CoA from acetyl-CoA: step 1/1. Functionally, component of the acetyl coenzyme A carboxylase (ACC) complex. First, biotin carboxylase catalyzes the carboxylation of biotin on its carrier protein (BCCP) and then the CO(2) group is transferred by the carboxyltransferase to acetyl-CoA to form malonyl-CoA. The protein is Acetyl-coenzyme A carboxylase carboxyl transferase subunit alpha of Idiomarina loihiensis (strain ATCC BAA-735 / DSM 15497 / L2-TR).